We begin with the raw amino-acid sequence, 174 residues long: Small ribosomal subunit protein uS5 (174 aa).

One can recognise an S5 DRBM domain in the interval 20 to 83; sequence IEDQLVAINR…EAGKKRMIKV (64 aa).

This sequence belongs to the universal ribosomal protein uS5 family. In terms of assembly, part of the 30S ribosomal subunit. Contacts proteins S4 and S8.

Its function is as follows. With S4 and S12 plays an important role in translational accuracy. In terms of biological role, located at the back of the 30S subunit body where it stabilizes the conformation of the head with respect to the body. In Lactobacillus gasseri (strain ATCC 33323 / DSM 20243 / BCRC 14619 / CIP 102991 / JCM 1131 / KCTC 3163 / NCIMB 11718 / NCTC 13722 / AM63), this protein is Small ribosomal subunit protein uS5.